The following is a 422-amino-acid chain: Metallocarboxypeptidase A-like protein TRV_02598 (422 aa).

The first 16 residues, 1–16 (MQSLLLLATLLGSALG), serve as a signal peptide directing secretion. A propeptide spans 17–119 (GAIPSQSANY…ELLTLDGGAN (103 aa)) (activation peptide). The Peptidase M14 domain maps to 125–421 (SYHKYEDHLK…AGVKAMFSKL (297 aa)). The Zn(2+) site is built by His185 and Glu188. Residues 185-188 (HARE), Arg240, and 256-257 (NR) each bind substrate. A disulfide bond links Cys250 and Cys273. His311 is a Zn(2+) binding site. 312 to 313 (SY) serves as a coordination point for substrate. The active-site Proton donor/acceptor is the Glu387.

This sequence belongs to the peptidase M14 family. The cofactor is Zn(2+).

The protein resides in the secreted. In terms of biological role, extracellular metalloprotease that contributes to pathogenicity. This Trichophyton verrucosum (strain HKI 0517) protein is Metallocarboxypeptidase A-like protein TRV_02598.